Here is a 120-residue protein sequence, read N- to C-terminus: Large ribosomal subunit protein bL20 (120 aa).

The protein belongs to the bacterial ribosomal protein bL20 family.

In terms of biological role, binds directly to 23S ribosomal RNA and is necessary for the in vitro assembly process of the 50S ribosomal subunit. It is not involved in the protein synthesizing functions of that subunit. The protein is Large ribosomal subunit protein bL20 of Ureaplasma urealyticum serovar 10 (strain ATCC 33699 / Western).